A 277-amino-acid polypeptide reads, in one-letter code: Shikimate dehydrogenase (NADP(+)) (277 aa).

Shikimate-binding positions include 15 to 17 and Thr-62; that span reads SLS. The Proton acceptor role is filled by Lys-66. The shikimate site is built by Asn-87 and Asp-102. NADP(+)-binding positions include 127–131, 151–156, and Ile-219; these read GAGGA and NRTRDK. Residue Tyr-221 participates in shikimate binding. Residue Gly-242 participates in NADP(+) binding.

Belongs to the shikimate dehydrogenase family. Homodimer.

It carries out the reaction shikimate + NADP(+) = 3-dehydroshikimate + NADPH + H(+). It participates in metabolic intermediate biosynthesis; chorismate biosynthesis; chorismate from D-erythrose 4-phosphate and phosphoenolpyruvate: step 4/7. In terms of biological role, involved in the biosynthesis of the chorismate, which leads to the biosynthesis of aromatic amino acids. Catalyzes the reversible NADPH linked reduction of 3-dehydroshikimate (DHSA) to yield shikimate (SA). In Bacillus mycoides (strain KBAB4) (Bacillus weihenstephanensis), this protein is Shikimate dehydrogenase (NADP(+)).